The sequence spans 519 residues: Probable cytosol aminopeptidase (519 aa).

Positions 251 and 256 each coordinate Mn(2+). Lys263 is an active-site residue. Asp274, Asp333, and Glu335 together coordinate Mn(2+). The active site involves Arg337. Positions 487–502 (VAPAAPAAPAAPAARP) are enriched in low complexity. The interval 487-519 (VAPAAPAAPAAPAARPAAKRTGRSQGGLKRTAP) is disordered.

Belongs to the peptidase M17 family. Requires Mn(2+) as cofactor.

It localises to the cytoplasm. The enzyme catalyses Release of an N-terminal amino acid, Xaa-|-Yaa-, in which Xaa is preferably Leu, but may be other amino acids including Pro although not Arg or Lys, and Yaa may be Pro. Amino acid amides and methyl esters are also readily hydrolyzed, but rates on arylamides are exceedingly low.. It carries out the reaction Release of an N-terminal amino acid, preferentially leucine, but not glutamic or aspartic acids.. Functionally, presumably involved in the processing and regular turnover of intracellular proteins. Catalyzes the removal of unsubstituted N-terminal amino acids from various peptides. This chain is Probable cytosol aminopeptidase, found in Verminephrobacter eiseniae (strain EF01-2).